Reading from the N-terminus, the 1595-residue chain is MTYIYNIYMSYSRGNLDRYIDQRLNRFYDQLISQRYAYSIPGIPGIKGDKGLTGSRIFLRNGIPQNELGTNGDLYINLLTDDLYFKNDSFWSLVGNLRGEKGEKGQLGIMGYKGEKGEIGSQGIKGMKGSDGLNGSTILFGQGLPRPYEGENGDVYIDKNTGIMYKKINGIWIPQVGLKGSQGDQGYKGDQGSKGDKGQKGEFGSAGFKGDKGDMGQKGETGAKGDKGDKGEGSKGSKGDVGNKGDKGNKGDKGIKGDKGSEGIKGDNGIKGDNGTKGDNGTKGDNGTKGDKGDIGDNGIKGDKGDIGDNGIKGDKGNKGDNGDKGNKGDKGDIGDKGMKGDKGDIGDKGDIGDKGMKGDKGDIGDKGMKGDNSTKGDKGDNGTKGDKGDNGIKGDKGDNGTKGDNGDNGTKGDKGDNGIKGDKGDKGTKGDKGDKGTKGDNGDKGTKGDNGIKGYKGDIGDKGIKGESGANADKGDKGIKGDKGDKGIKGDDGSKGDKGYNGEIGQKGDNGEKGDNGEKGDNGEKGDKGEKGDIGEKGDNGEKGDIGEKGNKGSKGDKGEIGSSILFGQGIPSPDLGNDGDIYIDDNTGILYKKLNGIWVPQTDIKGEKGDKGESGQSANKGDKGDKGNGGEIGNKGDKGSKGDIGDKGNKGDKGDGGIKGNKGDKGSKGDKGSKGDKGDKGDEGIKGDKGNKGDKGDKGDIGSQGIKGESGSAVFKGDKGTKGDKGNKGDKGNKGDKGTNGDKGNKGDKGSKGDKGTKGDKGIKGDKGDKGSKGNKGSKGDKGDKGDSGDKGDKGDKGSKGYKGDKGDKGSKGYKGDKGDKGIKGNTGSKGDKGSKGDKGEKGSKGNKGEKGEKGFKGEKGSKGEKGSKGNKGDKGDKGFKGDNGIKGNIGVKGDKGDSGIKGENGLKGDVGDKGIKGDKGNEGDKGDKGNKGEKGNRGDEGDKGIKGNKGDKGIKGSEGDKGIKGESGSKGDKGEKGNKGYKGDKGDKGNLGIKGDKGDKGIKGVKGTKGDKGTKGVKGTKGDKGDKGTNGDKGDKGIKGTNGDKGNKGLEGDKGNIGGKGDKGDKGDKGDKGDKGDKGVNGDKGSKGDKGDQGTKGETGLSIKGDKGDKGEFGLSIKGDKGVKGDQGYKGDKGDKGIKGDKGDKGIKGDQGIKGNKGDKGDKGNLGDKGDKGIKGDKGIKGDKGIKGDKGIKGDKGIKGDKGDKGIKGDKGDKGDKDDKGNKGDKGDKGDKGIKGDKGDKGDKGDQGDQGIKGESGASVFKGDKGDKGDKGDKGDKGDKGAKGDKGDKGDKGDQGIKGESGASVFKGDKGDTGSQGDKGIKGESGVSLNYVMSYYNATPGNFSSPVPVGASIAYVSTVGGGGGGSYFRRLNVGIVGGGGGGGGGALFRLPLSVMPGQSLSGVIGGPGLGAADSTTNATKGGDTIIYYGQYTFIAGGGNPGINSAADTASFIKGGDGGTVTNPLLTTQPTPGTGSTSTGSAGGNGQMSFYCFSGAGGGAGTSFTSSSGGNVGMFPGGNGVTTTYNNAGSGGGGASAFDKGGNGSIRFNPPSSGTKGSGGGGSVQGGGGTIPNDGYPGGNGGPGFVSIDYYSS.

2 N-linked (GlcNAc...) asparagine; by host glycosylation sites follow: Asn-87 and Asn-134. 4 consecutive Collagen-like domains span residues 97–155 (LRGE…NGDV), 175–233 (QVGL…KGEG), 236–295 (GSKG…KGDI), and 299–358 (GIKG…KGMK). Residues 181-190 (SQGDQGYKGD) show a composition bias toward low complexity. Disordered regions lie at residues 181-577 (SQGD…SPDL) and 604-1326 (TDIK…GIKG). 14 stretches are compositionally biased toward basic and acidic residues: residues 191-200 (QGSKGDKGQK), 209-448 (KGDK…KGTK), 456-466 (YKGDIGDKGIK), 474-501 (DKGDKGIKGDKGDKGIKGDDGSKGDKGY), 510-561 (DNGE…DKGE), 606-615 (IKGEKGDKGE), 622-702 (KGDK…DKGD), 718-825 (KGDK…DKGI), 832-883 (KGDK…KGFK), 895-1041 (KGDK…DKGI), 1048-1098 (KGNK…DQGT), 1107-1151 (KGDK…KGIK), 1159-1250 (NKGD…KGDQ), and 1265-1300 (KGDKGDKGDKGDKGDKGDKGAKGDKGDKGDKGDQGI). N-linked (GlcNAc...) asparagine; by host glycans are attached at residues Asn-274, Asn-280, and Asn-286. Residues Asn-373, Asn-382, Asn-400, and Asn-409 are each glycosylated (N-linked (GlcNAc...) asparagine; by host). Collagen-like domains follow at residues 380 to 559 (GDNG…KGDK), 608 to 907 (GEKG…KGEN), 920 to 1039 (GDKG…KGDK), 1043 to 1102 (GTNG…KGET), and 1128 to 1307 (GDQG…SGAS). Residues Asn-1345, Asn-1420, and Asn-1545 are each glycosylated (N-linked (GlcNAc...) asparagine; by host). The interval 1538-1585 (SAFDKGGNGSIRFNPPSSGTKGSGGGGSVQGGGGTIPNDGYPGGNGGP) is disordered. Positions 1558–1585 (KGSGGGGSVQGGGGTIPNDGYPGGNGGP) are enriched in gly residues.

In terms of processing, may be hydroxylated on lysine by the viral-encoded procollagen-lysine,2-oxoglutarate 5-dioxygenase.

It is found in the virion. Functionally, may participate in the formation of a layer of cross-linked glycosylated fibrils at the viral surface thus giving it a hairy-like appearance. The polypeptide is Collagen-like protein 2 (Acanthamoeba polyphaga (Amoeba)).